The primary structure comprises 118 residues: Late cornified envelope protein 1F (118 aa).

Residues 1-10 show a composition bias toward low complexity; it reads MSCQQSQQQC. Disordered stretches follow at residues 1-23 and 82-118; these read MSCQQSQQQCQPPPKCTPKCPPK and RRRSHRHRPQSSDCCSQPSAGSSCCGGGSGQHSGGCC. Residues 11-23 are compositionally biased toward pro residues; the sequence is QPPPKCTPKCPPK. A compositionally biased stretch (low complexity) spans 95-104; that stretch reads CCSQPSAGSS. The segment covering 105-118 has biased composition (gly residues); the sequence is CCGGGSGQHSGGCC.

It belongs to the LCE family. Skin-specific. Expression was readily detected in adult trunk skin, adult arm skin, fetal skin, penal skin, vulva, esophagus and tongue. Not expressed in the cervix, rectum, lung, colon, or placenta. Expression is observed in the fibroblasts.

Functionally, precursors of the cornified envelope of the stratum corneum. The polypeptide is Late cornified envelope protein 1F (LCE1F) (Homo sapiens (Human)).